We begin with the raw amino-acid sequence, 155 residues long: MIDKSGYRANVAIVLLNRQDRVFWGQRKSRTSWQFPQGGVATGETPLQAMYRELYEEVGLRPHDVEVIASTRDWFKYDIPDSLVRSREPVCIGQKQKWFLLRLKTSESNINLEANDSPEFDNWRWVSYWYPINHVVYFKQDVYRRALTYFKEYIN.

The region spanning 6–148 (GYRANVAIVL…KQDVYRRALT (143 aa)) is the Nudix hydrolase domain. Residues 38-59 (GGVATGETPLQAMYRELYEEVG) carry the Nudix box motif.

It belongs to the Nudix hydrolase family. RppH subfamily. The cofactor is a divalent metal cation.

Its function is as follows. Accelerates the degradation of transcripts by removing pyrophosphate from the 5'-end of triphosphorylated RNA, leading to a more labile monophosphorylated state that can stimulate subsequent ribonuclease cleavage. The polypeptide is RNA pyrophosphohydrolase (Francisella philomiragia subsp. philomiragia (strain ATCC 25017 / CCUG 19701 / FSC 153 / O#319-036)).